Reading from the N-terminus, the 252-residue chain is Imidazole glycerol phosphate synthase subunit HisF (252 aa).

Active-site residues include Asp11 and Asp130.

Belongs to the HisA/HisF family. As to quaternary structure, heterodimer of HisH and HisF.

The protein resides in the cytoplasm. It carries out the reaction 5-[(5-phospho-1-deoxy-D-ribulos-1-ylimino)methylamino]-1-(5-phospho-beta-D-ribosyl)imidazole-4-carboxamide + L-glutamine = D-erythro-1-(imidazol-4-yl)glycerol 3-phosphate + 5-amino-1-(5-phospho-beta-D-ribosyl)imidazole-4-carboxamide + L-glutamate + H(+). Its pathway is amino-acid biosynthesis; L-histidine biosynthesis; L-histidine from 5-phospho-alpha-D-ribose 1-diphosphate: step 5/9. Its function is as follows. IGPS catalyzes the conversion of PRFAR and glutamine to IGP, AICAR and glutamate. The HisF subunit catalyzes the cyclization activity that produces IGP and AICAR from PRFAR using the ammonia provided by the HisH subunit. This Streptococcus sanguinis (strain SK36) protein is Imidazole glycerol phosphate synthase subunit HisF.